Here is a 287-residue protein sequence, read N- to C-terminus: Ribonuclease Z (287 aa).

Zn(2+) contacts are provided by His64, His66, Asp68, His69, His124, Asp191, and His250. The active-site Proton acceptor is Asp68.

It belongs to the RNase Z family. In terms of assembly, homodimer. Zn(2+) serves as cofactor.

The enzyme catalyses Endonucleolytic cleavage of RNA, removing extra 3' nucleotides from tRNA precursor, generating 3' termini of tRNAs. A 3'-hydroxy group is left at the tRNA terminus and a 5'-phosphoryl group is left at the trailer molecule.. Functionally, zinc phosphodiesterase, which displays some tRNA 3'-processing endonuclease activity. Probably involved in tRNA maturation, by removing a 3'-trailer from precursor tRNA. This chain is Ribonuclease Z, found in Pyrobaculum neutrophilum (strain DSM 2338 / JCM 9278 / NBRC 100436 / V24Sta) (Thermoproteus neutrophilus).